The chain runs to 443 residues: Alpha-amylase (443 aa).

A signal peptide spans 1–24; sequence MHNTLFRTALLAAALGSFSHTASA. Substrate is bound by residues H114 and R196. Residue D198 is the Nucleophile of the active site. 201–202 is a binding site for substrate; it reads KH. The active-site Proton donor is the E223. Residues G228 and H287 each contribute to the substrate site.

This sequence belongs to the glycosyl hydrolase 13 family.

Its subcellular location is the secreted. It carries out the reaction Endohydrolysis of (1-&gt;4)-alpha-D-glucosidic linkages in polysaccharides containing three or more (1-&gt;4)-alpha-linked D-glucose units.. In Aeromonas hydrophila, this protein is Alpha-amylase (amyA).